The following is a 183-amino-acid chain: MREYKVVVLGSGGVGKSALTVQFVTGTFIEKYDPTIEDFYRKEIEVDSSPSVLEILDTAGTEQFASMRDLYIKNGQGFILVYSLVNQQSFQDIKPMRDQIIRVKRYEKVPVILVGNKVDLESEREVSSNEGRALAEEWGCPFMETSAKSKTMVDELFAEIVRQMNYAAQPDKDDPCCSACNIQ.

Residue 10–17 coordinates GTP; it reads GSGGVGKS. The Effector region signature appears at 32–40; the sequence is YDPTIEDFY. GTP is bound by residues 57–61 and 116–119; these read DTAGT and NKVD. Residues Cys176 and Cys177 are each lipidated (S-palmitoyl cysteine). A Cysteine methyl ester modification is found at Cys180. Cys180 carries the S-farnesyl cysteine lipid modification. Residues 181-183 constitute a propeptide, removed in mature form; that stretch reads NIQ.

Belongs to the small GTPase superfamily. Ras family. In terms of assembly, interacts with PLCE1. Interacts with ARHGAP29, SGSM1, SGSM2 and SGSM3. Interacts (GTP-bound form preferentially) with MAP4K4. Interacts with MINK1. Interacts with cytoskeletal actin. Interacts (GTP-bound form) with RUNDC3A. Interacts (GTP-bound form preferentially) with TNIK (via the CNH domain); the interaction is direct and recruits RAP2A to the E3 ubiquitin ligase NEDD4. Interacts with RGS14; the interaction is GTP-dependent. Post-translationally, ubiquitinated; undergoes 'Lys-63' monoubiquitination and diubiquitination by NEDD4. Multiple lysine residues are probably modified. Ubiquitination requires TNIK, prevents interaction with effectors and inactivates RAP2A. Ubiquitination by the ECS(RAB40B) complex leads to RAP2A localization to lamellipodia plasma membrane, activation, and regulation of sorting at early endosomes for recycling to the lamellipodia plasma membrane. Palmitoylated. Palmitoylation is required for association with recycling endosome membranes and activation of TNIK. As to expression, expressed in granular layer of the cerebellum, forebrain, striatum, layer V of the cortex, olfactory cortex, tubercules, subthalamic and hippocampus, particularly in the CA2 region, to a lesser extent in the CA1 region and the external layer of the dentate gyrus. Expressed in neurons.

The protein localises to the midbody. The protein resides in the cell projection. It localises to the lamellipodium membrane. Its subcellular location is the golgi apparatus. It is found in the recycling endosome membrane. The protein localises to the lysosome. It catalyses the reaction GTP + H2O = GDP + phosphate + H(+). With respect to regulation, activated by the guanine nucleotide-exchange factors RAPGEF3 and RAPGEF4 in a cAMP-dependent manner. Nucleotide exchange is also specifically stimulated by RAPGEF5, RASGEF1A and RASGEF1B. In terms of biological role, small GTP-binding protein which cycles between a GDP-bound inactive and a GTP-bound active form. In its active form interacts with and regulates several effectors including MAP4K4, MINK1 and TNIK. Part of a signaling complex composed of NEDD4, RAP2A and TNIK which regulates neuronal dendrite extension and arborization during development. More generally, it is part of several signaling cascades and may regulate cytoskeletal rearrangements, cell migration, cell adhesion and cell spreading. This is Ras-related protein Rap-2a from Mus musculus (Mouse).